Here is a 343-residue protein sequence, read N- to C-terminus: L-threonine 3-dehydrogenase (343 aa).

Cys-40 contacts Zn(2+). Active-site charge relay system residues include Thr-42 and His-45. Residues His-65, Glu-66, Cys-95, Cys-98, Cys-101, and Cys-109 each contribute to the Zn(2+) site. Residues Ile-177, Asp-197, Arg-202, 264 to 266 (LGI), and 288 to 289 (IY) contribute to the NAD(+) site.

The protein belongs to the zinc-containing alcohol dehydrogenase family. Homotetramer. Zn(2+) is required as a cofactor.

It is found in the cytoplasm. It catalyses the reaction L-threonine + NAD(+) = (2S)-2-amino-3-oxobutanoate + NADH + H(+). It functions in the pathway amino-acid degradation; L-threonine degradation via oxydo-reductase pathway; glycine from L-threonine: step 1/2. In terms of biological role, catalyzes the NAD(+)-dependent oxidation of L-threonine to 2-amino-3-ketobutyrate. This is L-threonine 3-dehydrogenase from Vibrio atlanticus (strain LGP32) (Vibrio splendidus (strain Mel32)).